We begin with the raw amino-acid sequence, 738 residues long: NADH dehydrogenase [ubiquinone] iron-sulfur protein 1, mitochondrial (738 aa).

The N-terminal 27 residues, 1-27, are a transit peptide targeting the mitochondrion; that stretch reads MGLGLLASRALRSSRIIRNSTRTIVST. Residues 66–144 form the 2Fe-2S ferredoxin-type domain; that stretch reads DVIEVFVDGY…GMKIKTDTPI (79 aa). [2Fe-2S] cluster contacts are provided by Cys100, Cys111, Cys114, and Cys128. The 40-residue stretch at 144-183 folds into the 4Fe-4S His(Cys)3-ligated-type domain; sequence IAKKAREGVMEFLLMNHPLDCPICDQGGECDLQDQSMAFG. Residues His160, Cys164, Cys167, Cys173, Cys212, Cys215, Cys218, and Cys262 each contribute to the [4Fe-4S] cluster site. The 4Fe-4S Mo/W bis-MGD-type domain occupies 281-337; sequence LKGTESIDVTDAVGSNIRIDSRGPEVMRVVPRLNEDINEEWISDKTRFFYDGLKRQR.

The protein belongs to the complex I 75 kDa subunit family. Complex I is composed of about 45 different subunits. This is a component of the iron-sulfur (IP) fragment of the enzyme. It depends on [2Fe-2S] cluster as a cofactor. [4Fe-4S] cluster is required as a cofactor.

The protein resides in the mitochondrion inner membrane. It carries out the reaction a ubiquinone + NADH + 5 H(+)(in) = a ubiquinol + NAD(+) + 4 H(+)(out). Its function is as follows. Core subunit of the mitochondrial membrane respiratory chain NADH dehydrogenase (Complex I) that is believed to belong to the minimal assembly required for catalysis. Complex I functions in the transfer of electrons from NADH to the respiratory chain. The immediate electron acceptor for the enzyme is believed to be ubiquinone. This is the largest subunit of complex I and it is a component of the iron-sulfur (IP) fragment of the enzyme. It may form part of the active site crevice where NADH is oxidized. This Solanum tuberosum (Potato) protein is NADH dehydrogenase [ubiquinone] iron-sulfur protein 1, mitochondrial.